Here is a 588-residue protein sequence, read N- to C-terminus: MFS siderochrome iron transporter 1 (588 aa).

A run of 13 helical transmembrane segments spans residues 60–80 (QVWS…ITFV), 104–124 (LTAS…LPLA), 133–153 (PQGF…MAAC), 161–181 (AAQV…SIFI), 191–211 (ALMF…GGPL), 225–245 (YGAF…VFAW), 278–298 (IIGI…FSLY), 307–327 (SSLV…FALY), 348–368 (LGAC…DSYF), 385–405 (YIVN…GILV), 413–433 (WLAL…MITF), 440–460 (IGYI…CVIT), and 473–495 (YVAV…GQTV). Asparagine 519 is a glycosylation site (N-linked (GlcNAc...) asparagine). Residues 552 to 572 (KYMLIGGTAILAVGLGATMMW) traverse the membrane as a helical segment.

Belongs to the major facilitator superfamily.

Its subcellular location is the membrane. Functionally, major facilitator transporter involved in siderophore transport. The protein is MFS siderochrome iron transporter 1 of Ajellomyces capsulatus (Darling's disease fungus).